Reading from the N-terminus, the 116-residue chain is Transmembrane protein 213 (116 aa).

Residues 1-35 form the signal peptide; that stretch reads MAQSGVFLRNPGHLTSAPQAALLFSLVLTSFHLSC. Topologically, residues 36–79 are extracellular; sequence GTETSSSNSTLSAHHPDPGTLEQCANVDFCPLASLCCRASVDEY. Residues 80–100 form a helical membrane-spanning segment; that stretch reads GWIAAAVGWSFWFLTLILLCV. Over 101–116 the chain is Cytoplasmic; sequence DKLMKLTPEEPKDLAA.

The protein resides in the membrane. The protein is Transmembrane protein 213 (Tmem213) of Mus musculus (Mouse).